The following is a 325-amino-acid chain: Lipoyl synthase (325 aa).

Residues 1–31 (MANLIDNTARSAASDARAARHPEKQKRADTP) are disordered. A compositionally biased stretch (basic and acidic residues) spans 17–31 (RAARHPEKQKRADTP). Positions 65, 70, 76, 91, 95, 98, and 304 each coordinate [4Fe-4S] cluster. Residues 77-293 (WEQKHATFMI…ETIARAKGFL (217 aa)) enclose the Radical SAM core domain.

It belongs to the radical SAM superfamily. Lipoyl synthase family. Requires [4Fe-4S] cluster as cofactor.

The protein localises to the cytoplasm. It carries out the reaction [[Fe-S] cluster scaffold protein carrying a second [4Fe-4S](2+) cluster] + N(6)-octanoyl-L-lysyl-[protein] + 2 oxidized [2Fe-2S]-[ferredoxin] + 2 S-adenosyl-L-methionine + 4 H(+) = [[Fe-S] cluster scaffold protein] + N(6)-[(R)-dihydrolipoyl]-L-lysyl-[protein] + 4 Fe(3+) + 2 hydrogen sulfide + 2 5'-deoxyadenosine + 2 L-methionine + 2 reduced [2Fe-2S]-[ferredoxin]. Its pathway is protein modification; protein lipoylation via endogenous pathway; protein N(6)-(lipoyl)lysine from octanoyl-[acyl-carrier-protein]: step 2/2. Its function is as follows. Catalyzes the radical-mediated insertion of two sulfur atoms into the C-6 and C-8 positions of the octanoyl moiety bound to the lipoyl domains of lipoate-dependent enzymes, thereby converting the octanoylated domains into lipoylated derivatives. The sequence is that of Lipoyl synthase from Maricaulis maris (strain MCS10) (Caulobacter maris).